We begin with the raw amino-acid sequence, 627 residues long: (-)-alpha-pinene synthase 1, chloroplastic (627 aa).

The transit peptide at 1–36 (MALVSIAPLASKSCLHKSLSSSAHELKTICRTIPTL) directs the protein to the chloroplast. Residues D378, D382, and D530 each contribute to the Mg(2+) site. Residues 378-382 (DDMYD) carry the DDXXD motif motif.

Belongs to the terpene synthase family. Tpsd subfamily. Mg(2+) is required as a cofactor. The cofactor is Mn(2+).

Its subcellular location is the plastid. It is found in the chloroplast. The catalysed reaction is (2E)-geranyl diphosphate = (1S,5S)-beta-pinene + diphosphate. The enzyme catalyses (2E)-geranyl diphosphate = (1S,5S)-alpha-pinene + diphosphate. It functions in the pathway terpene metabolism; oleoresin biosynthesis. Functionally, terpene synthase (TPS) involved in the biosynthesis of monoterpene natural products included in conifer oleoresin secretions and volatile emissions; these compounds contribute to biotic and abiotic stress defense against herbivores and pathogens. Catalyzes the conversion of (2E)-geranyl diphosphate (GPP) to (1S,5S)-beta-pinene. The polypeptide is (-)-alpha-pinene synthase 1, chloroplastic (Picea sitchensis (Sitka spruce)).